The sequence spans 100 residues: MSFSKREAGDVWSILFVTGIVTACLFAGVSVLMRMRFPDKSRPEWMLAGLIVLGVFAIWYSLVYVRGWEGAALGMLGFNVIFGAIAGYLIDKAIRRYRKR.

Helical transmembrane passes span 11 to 33 (VWSILFVTGIVTACLFAGVSVLM), 45 to 64 (WMLAGLIVLGVFAIWYSLVY), and 68 to 90 (WEGAALGMLGFNVIFGAIAGYLI).

The protein localises to the cell membrane. This is an uncharacterized protein from Bacillus subtilis (strain 168).